Here is a 209-residue protein sequence, read N- to C-terminus: Glutathione S-transferase 1, isoform D (209 aa).

The region spanning 1–80 (MDFYYLPGSA…YLAEKYGKDD (80 aa)) is the GST N-terminal domain. Residues serine 9, 50–52 (HCI), and 64–66 (ESR) contribute to the glutathione site. One can recognise a GST C-terminal domain in the interval 86–207 (DPQKRAVVNQ…AGADEFKAKF (122 aa)).

Belongs to the GST superfamily. Theta family. Homodimer.

It catalyses the reaction RX + glutathione = an S-substituted glutathione + a halide anion + H(+). The catalysed reaction is 1,1,1-trichloro-2,2-bis(4-chlorophenyl)ethane = 1,1-dichloro-2,2-bis(4-chlorophenyl)ethylene + chloride + H(+). Its activity is regulated as follows. Inhibited by S-hexylglutathione. Functionally, conjugation of reduced glutathione to a wide number of exogenous and endogenous hydrophobic electrophiles. Has DDT dehydrochlorinase activity. The chain is Glutathione S-transferase 1, isoform D (GstD1) from Anopheles gambiae (African malaria mosquito).